A 134-amino-acid polypeptide reads, in one-letter code: Profilin-2 (134 aa).

Residues Cys-13 and Cys-118 are joined by a disulfide bond. An Involved in PIP2 interaction motif is present at residues 84 to 100; that stretch reads AVTRGKKGTGGITIKKT. Position 114 is a phosphothreonine (Thr-114).

Belongs to the profilin family. As to quaternary structure, occurs in many kinds of cells as a complex with monomeric actin in a 1:1 ratio. Post-translationally, phosphorylated by MAP kinases.

It is found in the cytoplasm. It localises to the cytoskeleton. Binds to actin and affects the structure of the cytoskeleton. At high concentrations, profilin prevents the polymerization of actin, whereas it enhances it at low concentrations. The sequence is that of Profilin-2 from Olea europaea (Common olive).